Here is a 338-residue protein sequence, read N- to C-terminus: 2-methyl-6-phytyl-1,4-hydroquinone methyltransferase, chloroplastic (338 aa).

The N-terminal 51 residues, Met-1–Ser-51, are a transit peptide targeting the chloroplast. Topologically, residues Ser-52–Arg-307 are chloroplast intermembrane. Residues Val-114 to Phe-123 are SAM motif I. The tract at residues Cys-159–Pro-172 is SAM motif II. The SAM motif III stretch occupies residues Arg-200–Pro-213. A helical transmembrane segment spans residues Phe-308 to Lys-328. Topologically, residues Asp-329 to Ile-338 are stromal.

It belongs to the class I-like SAM-binding methyltransferase superfamily. MPBQ/MBSQ MT family.

The protein resides in the plastid. The protein localises to the chloroplast inner membrane. It carries out the reaction 2-methyl-6-phytyl-1,4-benzene-1,4-diol + S-adenosyl-L-methionine = 2,3-dimethyl-6-phytylbenzene-1,4-diol + S-adenosyl-L-homocysteine + H(+). The enzyme catalyses 2-methyl-6-(all-trans-nonaprenyl)benzene-1,4-diol + S-adenosyl-L-methionine = plastoquinol-9 + S-adenosyl-L-homocysteine + H(+). It catalyses the reaction 6-geranylgeranyl-2-methylbenzene-1,4-diol + S-adenosyl-L-methionine = 6-geranylgeranyl-2,3-dimethylbenzene-1,4-diol + S-adenosyl-L-homocysteine + H(+). The protein operates within cofactor biosynthesis; tocopherol biosynthesis. Involved in a key methylation step in both tocopherols (vitamin E) and plastoquinone synthesis. Catalyzes the conversion of 2-methyl-6-phytyl-1,4-hydroquinone (MPBQ) to 2,3-dimethyl-6-phytyl-1,4-hydroquinone (DMPQ, a substrate for tocopherol cyclase), and 2-methyl-6-solanyl-1,4-benzoquinone (MSBQ) to plastoquinone. The polypeptide is 2-methyl-6-phytyl-1,4-hydroquinone methyltransferase, chloroplastic (VTE3) (Arabidopsis thaliana (Mouse-ear cress)).